We begin with the raw amino-acid sequence, 269 residues long: Formamidopyrimidine-DNA glycosylase (269 aa).

P2 acts as the Schiff-base intermediate with DNA in catalysis. Catalysis depends on E3, which acts as the Proton donor. The active-site Proton donor; for beta-elimination activity is K58. DNA contacts are provided by H91, R110, and K150. Residues S235–T269 form an FPG-type zinc finger. The active-site Proton donor; for delta-elimination activity is the R259.

Belongs to the FPG family. Monomer. It depends on Zn(2+) as a cofactor.

The catalysed reaction is Hydrolysis of DNA containing ring-opened 7-methylguanine residues, releasing 2,6-diamino-4-hydroxy-5-(N-methyl)formamidopyrimidine.. The enzyme catalyses 2'-deoxyribonucleotide-(2'-deoxyribose 5'-phosphate)-2'-deoxyribonucleotide-DNA = a 3'-end 2'-deoxyribonucleotide-(2,3-dehydro-2,3-deoxyribose 5'-phosphate)-DNA + a 5'-end 5'-phospho-2'-deoxyribonucleoside-DNA + H(+). In terms of biological role, involved in base excision repair of DNA damaged by oxidation or by mutagenic agents. Acts as a DNA glycosylase that recognizes and removes damaged bases. Has a preference for oxidized purines, such as 7,8-dihydro-8-oxoguanine (8-oxoG). Has AP (apurinic/apyrimidinic) lyase activity and introduces nicks in the DNA strand. Cleaves the DNA backbone by beta-delta elimination to generate a single-strand break at the site of the removed base with both 3'- and 5'-phosphates. The sequence is that of Formamidopyrimidine-DNA glycosylase from Ruthia magnifica subsp. Calyptogena magnifica.